We begin with the raw amino-acid sequence, 384 residues long: N-acetyldiaminopimelate deacetylase (384 aa).

Residue Asp75 is part of the active site. Glu134 acts as the Proton acceptor in catalysis.

Belongs to the peptidase M20A family. N-acetyldiaminopimelate deacetylase subfamily.

The catalysed reaction is N-acetyl-(2S,6S)-2,6-diaminopimelate + H2O = (2S,6S)-2,6-diaminopimelate + acetate. It participates in amino-acid biosynthesis; L-lysine biosynthesis via DAP pathway; LL-2,6-diaminopimelate from (S)-tetrahydrodipicolinate (acetylase route): step 3/3. Catalyzes the conversion of N-acetyl-diaminopimelate to diaminopimelate and acetate. In Lactobacillus helveticus (strain DPC 4571), this protein is N-acetyldiaminopimelate deacetylase.